Reading from the N-terminus, the 448-residue chain is Probable D-serine dehydratase (448 aa).

Lys-119 carries the N6-(pyridoxal phosphate)lysine modification.

The protein belongs to the serine/threonine dehydratase family. DsdA subfamily. Pyridoxal 5'-phosphate serves as cofactor.

It carries out the reaction D-serine = pyruvate + NH4(+). This Pseudomonas paraeruginosa (strain DSM 24068 / PA7) (Pseudomonas aeruginosa (strain PA7)) protein is Probable D-serine dehydratase.